Consider the following 354-residue polypeptide: Uroporphyrinogen decarboxylase (354 aa).

Substrate contacts are provided by residues 27-31, Phe46, Asp77, Tyr154, Ser209, and His327; that span reads RQAGR.

The protein belongs to the uroporphyrinogen decarboxylase family. In terms of assembly, homodimer.

It localises to the cytoplasm. The enzyme catalyses uroporphyrinogen III + 4 H(+) = coproporphyrinogen III + 4 CO2. Its pathway is porphyrin-containing compound metabolism; protoporphyrin-IX biosynthesis; coproporphyrinogen-III from 5-aminolevulinate: step 4/4. Functionally, catalyzes the decarboxylation of four acetate groups of uroporphyrinogen-III to yield coproporphyrinogen-III. The protein is Uroporphyrinogen decarboxylase of Pseudomonas syringae pv. tomato (strain ATCC BAA-871 / DC3000).